Reading from the N-terminus, the 245-residue chain is 1-(5-phosphoribosyl)-5-[(5-phosphoribosylamino)methylideneamino] imidazole-4-carboxamide isomerase (245 aa).

Aspartate 7 serves as the catalytic Proton acceptor. Aspartate 129 acts as the Proton donor in catalysis.

Belongs to the HisA/HisF family.

It is found in the cytoplasm. The enzyme catalyses 1-(5-phospho-beta-D-ribosyl)-5-[(5-phospho-beta-D-ribosylamino)methylideneamino]imidazole-4-carboxamide = 5-[(5-phospho-1-deoxy-D-ribulos-1-ylimino)methylamino]-1-(5-phospho-beta-D-ribosyl)imidazole-4-carboxamide. It functions in the pathway amino-acid biosynthesis; L-histidine biosynthesis; L-histidine from 5-phospho-alpha-D-ribose 1-diphosphate: step 4/9. In Shewanella loihica (strain ATCC BAA-1088 / PV-4), this protein is 1-(5-phosphoribosyl)-5-[(5-phosphoribosylamino)methylideneamino] imidazole-4-carboxamide isomerase.